A 581-amino-acid polypeptide reads, in one-letter code: NADH-quinone oxidoreductase subunit C/D (581 aa).

The segment at 1 to 172 is NADH dehydrogenase I subunit C; sequence MSGAELISDL…PPFVMTAARF (172 aa). The interval 196–581 is NADH dehydrogenase I subunit D; it reads ELMILNYGPH…IDYVMSDVDR (386 aa).

In the N-terminal section; belongs to the complex I 30 kDa subunit family. This sequence in the C-terminal section; belongs to the complex I 49 kDa subunit family. As to quaternary structure, NDH-1 is composed of 13 different subunits. Subunits NuoB, CD, E, F, and G constitute the peripheral sector of the complex.

The protein resides in the cell inner membrane. It carries out the reaction a quinone + NADH + 5 H(+)(in) = a quinol + NAD(+) + 4 H(+)(out). Its function is as follows. NDH-1 shuttles electrons from NADH, via FMN and iron-sulfur (Fe-S) centers, to quinones in the respiratory chain. The immediate electron acceptor for the enzyme in this species is believed to be ubiquinone. Couples the redox reaction to proton translocation (for every two electrons transferred, four hydrogen ions are translocated across the cytoplasmic membrane), and thus conserves the redox energy in a proton gradient. This Rhodopseudomonas palustris (strain BisA53) protein is NADH-quinone oxidoreductase subunit C/D.